Consider the following 107-residue polypeptide: DNA-directed RNA polymerase subunit omega (107 aa).

It belongs to the RNA polymerase subunit omega family. As to quaternary structure, the RNAP catalytic core consists of 2 alpha, 1 beta, 1 beta' and 1 omega subunit. When a sigma factor is associated with the core the holoenzyme is formed, which can initiate transcription.

It catalyses the reaction RNA(n) + a ribonucleoside 5'-triphosphate = RNA(n+1) + diphosphate. In terms of biological role, promotes RNA polymerase assembly. Latches the N- and C-terminal regions of the beta' subunit thereby facilitating its interaction with the beta and alpha subunits. The chain is DNA-directed RNA polymerase subunit omega from Mycolicibacterium smegmatis (strain ATCC 700084 / mc(2)155) (Mycobacterium smegmatis).